A 368-amino-acid polypeptide reads, in one-letter code: Glutamate 5-kinase (368 aa).

Residue Lys13 coordinates ATP. Substrate-binding residues include Ser54, Asp141, and Asn153. 173–174 (SD) serves as a coordination point for ATP. Residues 278-355 (KGSLRLDAGA…DEIPEILGYP (78 aa)) form the PUA domain.

This sequence belongs to the glutamate 5-kinase family.

The protein resides in the cytoplasm. The enzyme catalyses L-glutamate + ATP = L-glutamyl 5-phosphate + ADP. It functions in the pathway amino-acid biosynthesis; L-proline biosynthesis; L-glutamate 5-semialdehyde from L-glutamate: step 1/2. Catalyzes the transfer of a phosphate group to glutamate to form L-glutamate 5-phosphate. The sequence is that of Glutamate 5-kinase from Jannaschia sp. (strain CCS1).